We begin with the raw amino-acid sequence, 666 residues long: L-aspartate N-monooxygenase (nitrosuccinate-forming) (666 aa).

Residues 645-666 (LPAYEDPGVRCPSDDRLTEVTA) form a disordered region. Basic and acidic residues predominate over residues 656–666 (PSDDRLTEVTA).

Belongs to the nitrosuccinic acid synthase family. FAD is required as a cofactor.

The catalysed reaction is L-aspartate + 3 NADPH + 3 O2 + 2 H(+) = 2-nitrobutanedioate + 3 NADP(+) + 4 H2O. It functions in the pathway antibiotic biosynthesis. In terms of biological role, part of a gene cluster involved in the biosynthesis of cremeomycin, a light-sensitive o-diazoquinone with antibacterial and antiproliferative effects. Catalyzes the iterative oxidation of L-aspartic acid to nitrosuccinic acid (2-nitrobutanedioate) via N-hydroxyaspartic acid and nitrososuccinic acid. The chain is L-aspartate N-monooxygenase (nitrosuccinate-forming) from Streptomyces cremeus.